A 572-amino-acid polypeptide reads, in one-letter code: MAFNFNWSPLMADASFYTRAQDLLTAALNKSPKPPIIVDDIIVTELNLGSIPPELEILEIGDLAEDRFRGIFKMSYSGDAFLTLKTRVQANPLNTYLLTRPSFATPLPLAAATPLTIPLQITLSDIKLSGFVILVFSKQKGITVVFRNDPLESLKVSSTFDSIPFVRDFLQKEIEAQLRILFMDELPAIIHRLSLRLWVPEYRAGEDFETQAEKAETANGEGPGQDPLASPPQDPVDALGHALDESDIASLSLDSSVEAHSLFSQKNLLRLAALTDSQRTLSLFTPSIREVVYRAWTSPTDQTDAAGSVTSPVLSRTHSQVGSMSSFQDSASIASMQTRSSTPSHTFSGYGLSLGAGRHSKAHSRKRKKRVVDLRRPKTTDDAPSVSDESAFTESTSAPSVCSAPLPILNEQSDDPVTPPLSPDNDLHLPIIPDRHRMSISRPAPRRDIAAEMMRDMGGPSSTSDPATQATQSEDTSATPRATMRAQIPSIYLNEKQDAGSSTGVPRQLPSAILPFLNDNPMNRVVDQALVERLAGEIARRMRDEKFMATNACGSFWDRHSQEESPPPAYGH.

Residues 1–195 (MAFNFNWSPL…LPAIIHRLSL (195 aa)) enclose the SMP-LTD domain. Disordered stretches follow at residues 210–239 (TQAEKAETANGEGPGQDPLASPPQDPVDAL), 330–423 (SASI…PLSP), and 455–482 (RDMGGPSSTSDPATQATQSEDTSATPRA). Polar residues predominate over residues 330-347 (SASIASMQTRSSTPSHTF). The segment covering 358–370 (RHSKAHSRKRKKR) has biased composition (basic residues). Residues 371–381 (VVDLRRPKTTD) show a composition bias toward basic and acidic residues. 2 stretches are compositionally biased toward polar residues: residues 387–400 (SDESAFTESTSAPS) and 460–480 (PSSTSDPATQATQSEDTSATP).

Belongs to the MDM34 family. Component of the ER-mitochondria encounter structure (ERMES) or MDM complex, composed of mmm1, mdm10, mdm12 and mdm34.

Its subcellular location is the mitochondrion outer membrane. Its function is as follows. Component of the ERMES/MDM complex, which serves as a molecular tether to connect the endoplasmic reticulum (ER) and mitochondria. Components of this complex are involved in the control of mitochondrial shape and protein biogenesis, and function in nonvesicular lipid trafficking between the ER and mitochondria. Mdm34 is required for the interaction of the ER-resident membrane protein mmm1 and the outer mitochondrial membrane-resident beta-barrel protein mdm10. The chain is Mitochondrial distribution and morphology protein 34 from Aspergillus clavatus (strain ATCC 1007 / CBS 513.65 / DSM 816 / NCTC 3887 / NRRL 1 / QM 1276 / 107).